Here is a 352-residue protein sequence, read N- to C-terminus: Ion-translocating oxidoreductase complex subunit D (352 aa).

The next 4 helical transmembrane spans lie at 20-40, 44-64, 78-109, and 123-143; these read IMLL…WFFG, LFQI…VLSL, ALLT…IIIA, and PAMI…TSWL. At T187 the chain carries FMN phosphoryl threonine. A run of 5 helical transmembrane segments spans residues 214-234, 242-262, 267-287, 301-321, and 322-342; these read VLAG…GVFL, WHIP…GWLF, LASP…FFIL, LIFG…GGYP, and DGVA…DYYT.

Belongs to the NqrB/RnfD family. In terms of assembly, the complex is composed of six subunits: RsxA, RsxB, RsxC, RsxD, RsxE and RsxG. Requires FMN as cofactor.

The protein resides in the cell inner membrane. Functionally, part of a membrane-bound complex that couples electron transfer with translocation of ions across the membrane. Required to maintain the reduced state of SoxR. The polypeptide is Ion-translocating oxidoreductase complex subunit D (Salmonella arizonae (strain ATCC BAA-731 / CDC346-86 / RSK2980)).